The primary structure comprises 1203 residues: MEDCCDPLLATDASPRPESFSRSEKDIASRSRTVAMADLDSNCELSNDVDMEQSSPDLMKLEQSSDPVALDGKVVLGFSLASPDLVNCGASPDLPRGSYEDSPEFSKKRRFSTELSLENGIDGSTTTTRLGRKSQVVKFSAICQTFGYELSPESSFELPSPPGDFRESMTPVISINSGSISTDVTVEDVTFLKDEFFSGGESITTDAVVGNEDEILLYQTARLGNFAYKFQSLDPGDYFIDLHFAEIEFTKGPPGVISGLDLFSQVGANTPLVIEDLRMLVGREGELSIRLEGVTGAAILCGISIRKETTATYVEETGMLAVKGSTDTVLSQQTQENLVCRAEEEAEGMRSDCEQQRKEMEDMKRMVEELKLENQQKTRECEEALNSLSEIQNELMRKSMHVGSLAFAVEGQVKEKSRWFSSLRDLTRKLKIMKVEQIKLLEEATTYKHLVQDINEFSSHIQSRVKQDAELHENLKVKFVAGEKERKELYNKILELKGNIRVFCRCRPLNFEETEAGVSMGIDVESTKNGEVIVMSNGFPKKSFKFDSVFGPNASQADVFEDTAPFATSVIDGYNVCIFAYGQTGTGKTFTMEGTQHDRGVNYRTLENLFRIIKAREHRYNYEISVSVLEVYNEQIRDLLVPASQSASAPKRFEIRQLSEGNHHVPGLVEAPVKSIEEVWDVLKTGSNARAVGKTTANEHSSRSHCIHCVMVKGENLLNGECTKSKLWLVDLAGSERVAKTEVQGERLKETQNINKSLSALGDVIFALANKSSHIPFRNSKLTHLLQDSLGGDSKTLMFVQISPNENDQSETLCSLNFASRVRGIELGPAKKQLDNTELLKYKQMVEKWKQDMKGKDEQIRKMEETMYGLEAKIKERDTKNKTLQDKVKELESQLLVERKLARQHVDTKIAEQQTKQQTEDENNTSKRPPLTNILLGSASKEMVNLTRPSLLESTTSYDLAPLPSGVPKYNDLSEKENNPEMADQVHLPNKTGRFSICAKRIPSAPAPRRSSLAPTTSTSREMVYLTRPPLSESTTSYDLPPLPNGGLKYSDLIEKVNNQEMAEQVQIPKRIGAGRSSICAKRIPPAPRRKSFAPMPFIPITSTLTSPDEKSGANQVLCTSPKLHRSNGKTLTSILRRSIQKRMQMKPSPRQQPMRRGGGINVGMERVRLSIGNRGRLAHRVLLTNARKAGLKETPQKQERWI.

The interval 1-28 (MEDCCDPLLATDASPRPESFSRSEKDIA) is disordered. The segment covering 19 to 28 (SFSRSEKDIA) has biased composition (basic and acidic residues). Residues 336-395 (ENLVCRAEEEAEGMRSDCEQQRKEMEDMKRMVEELKLENQQKTRECEEALNSLSEIQNEL) are a coiled coil. Positions 499-825 (NIRVFCRCRP…LNFASRVRGI (327 aa)) constitute a Kinesin motor domain. Residue 582-589 (GQTGTGKT) participates in ATP binding. A coiled-coil region spans residues 846–901 (VEKWKQDMKGKDEQIRKMEETMYGLEAKIKERDTKNKTLQDKVKELESQLLVERKL). Positions 907-931 (DTKIAEQQTKQQTEDENNTSKRPPL) are disordered.

The protein belongs to the TRAFAC class myosin-kinesin ATPase superfamily. Kinesin family. KIN-14 subfamily.

In Arabidopsis thaliana (Mouse-ear cress), this protein is Kinesin-like protein KIN-14Q.